The primary structure comprises 542 residues: Chaperonin GroEL (542 aa).

ATP is bound by residues 29-32, Lys50, 86-90, Gly414, and Asp494; these read TLGP and DGTTT.

The protein belongs to the chaperonin (HSP60) family. In terms of assembly, forms a cylinder of 14 subunits composed of two heptameric rings stacked back-to-back. Interacts with the co-chaperonin GroES.

Its subcellular location is the cytoplasm. It carries out the reaction ATP + H2O + a folded polypeptide = ADP + phosphate + an unfolded polypeptide.. Functionally, together with its co-chaperonin GroES, plays an essential role in assisting protein folding. The GroEL-GroES system forms a nano-cage that allows encapsulation of the non-native substrate proteins and provides a physical environment optimized to promote and accelerate protein folding. This chain is Chaperonin GroEL, found in Cytophaga hutchinsonii (strain ATCC 33406 / DSM 1761 / CIP 103989 / NBRC 15051 / NCIMB 9469 / D465).